Here is a 657-residue protein sequence, read N- to C-terminus: UvrABC system protein B (657 aa).

Residues 25–182 (KSIKKGNEFQ…KKLIEIQYER (158 aa)) form the Helicase ATP-binding domain. Residue 38–45 (GVTGSGKT) coordinates ATP. Positions 91–114 (YYDYYQPEAYVPQTDTFIEKDASI) match the Beta-hairpin motif. The region spanning 429 to 595 (QIDDLYTEIQ…TINKEVRDLI (167 aa)) is the Helicase C-terminal domain. The 36-residue stretch at 621–656 (KKLIKEYTEEMMLAAKNLQFERAAQLRDEIEELKGK) folds into the UVR domain.

This sequence belongs to the UvrB family. As to quaternary structure, forms a heterotetramer with UvrA during the search for lesions. Interacts with UvrC in an incision complex.

Its subcellular location is the cytoplasm. In terms of biological role, the UvrABC repair system catalyzes the recognition and processing of DNA lesions. A damage recognition complex composed of 2 UvrA and 2 UvrB subunits scans DNA for abnormalities. Upon binding of the UvrA(2)B(2) complex to a putative damaged site, the DNA wraps around one UvrB monomer. DNA wrap is dependent on ATP binding by UvrB and probably causes local melting of the DNA helix, facilitating insertion of UvrB beta-hairpin between the DNA strands. Then UvrB probes one DNA strand for the presence of a lesion. If a lesion is found the UvrA subunits dissociate and the UvrB-DNA preincision complex is formed. This complex is subsequently bound by UvrC and the second UvrB is released. If no lesion is found, the DNA wraps around the other UvrB subunit that will check the other stand for damage. The polypeptide is UvrABC system protein B (Clostridium botulinum (strain Alaska E43 / Type E3)).